The following is a 431-amino-acid chain: Divalent metal cation transporter MntH (431 aa).

12 helical membrane-spanning segments follow: residues 30–50 (WSWT…IDPG), 63–83 (GYTL…IQTL), 106–126 (PLVW…DLAE), 137–159 (LFGL…ALHL), 169–189 (ILIG…LVLS), 209–229 (YALY…VIYL), 257–277 (VILG…MAAA), 287–307 (VATI…VTAS), 309–329 (VFGL…TLSG), 341–361 (IPLW…IMLG), 367–387 (ALVA…VPLL), and 405–425 (VTGV…YVLF).

It belongs to the NRAMP family.

The protein localises to the cell inner membrane. Its function is as follows. H(+)-stimulated, divalent metal cation uptake system. The chain is Divalent metal cation transporter MntH from Chromohalobacter salexigens (strain ATCC BAA-138 / DSM 3043 / CIP 106854 / NCIMB 13768 / 1H11).